Consider the following 818-residue polypeptide: H(+)/Cl(-) exchange transporter 3 (818 aa).

Over 1–125 the chain is Cytoplasmic; that stretch reads MESEQLFHRG…WEMTKSLYDA (125 aa). 3 short sequence motifs (di-leucine internalization motif; mediates targeting to late endosome and lysosome membranes) span residues 28–29, 46–47, and 71–75; these read LL and LLDLL. A helical transmembrane segment spans residues 126-163; the sequence is WSGWLVVTLTGLASGALAGLIDIAADWMTDLKEGICLS. N177 is a glycosylation site (N-linked (GlcNAc...) asparagine). A helical membrane pass occupies residues 209 to 232; the sequence is MNYIMYIFWALSFAFLAVSLVKVF. The Selectivity filter part_1 signature appears at 238 to 242; it reads GSGIP. Position 239 (S239) interacts with chloride. An intramembrane region (helical) is located at residues 241 to 248; that stretch reads IPEIKTIL. Transmembrane regions (helical) follow at residues 258–276 and 282–301; these read GKWT…VASG and EGPL…YLFP. Positions 280–284 match the Selectivity filter part_2 motif; that stretch reads GKEGP. 2 intramembrane regions (helical) span residues 313–325 and 329–337; these read VLSA…VSVA and PIGGVLFSL. Helical transmembrane passes span 349 to 367, 391 to 416, and 423 to 443; these read LWRS…RSIN, FPFI…AWCR, and FGKY…VIAF. Residues N451 and N479 are each glycosylated (N-linked (GlcNAc...) asparagine). The next 2 helical transmembrane spans lie at 500-520 and 525-544; these read IWQL…TFGI and GLFI…VGIA. Positions 525–529 match the Selectivity filter part_3 motif; sequence GLFIP. F527 contributes to the chloride binding site. 2 intramembrane regions (helical) span residues 572-586 and 590-601; these read GLYA…LGGV and TVSLVVIVFELT. An intramembrane region (note=Loop between two helices) is located at residues 602 to 605; the sequence is GGLE. A helical membrane pass occupies residues 606–624; that stretch reads YIVPLMAAVMTSKWVGDAF. The Cytoplasmic segment spans residues 625–818; that stretch reads GREGIYEAHI…NQDPASIMFN (194 aa). Y630 serves as a coordination point for chloride. 2 CBS domains span residues 658-722 and 755-812; these read MRPR…ARKK and LDMS…NQDP. ATP is bound by residues 689-691 and 796-799; these read YNG and TKKD.

This sequence belongs to the chloride channel (TC 2.A.49) family. ClC-3/CLCN3 subfamily. Monomer and homodimer. Forms heterodimers with CLCN4. As to quaternary structure, interacts with GOPC, PDZK1 and NHERF1/EBP50. In terms of processing, N-glycosylated. Expressed primarily in tissues derived from neuroectoderm. Within the brain, its expression is particularly evident in the hippocampus, olfactory cortex, and olfactory bulb. Highly expressed in aortic and coronary vascular smooth muscle cells, and aortic endothelial cells. Also expressed in tracheal and alveolar epithelial cells, and intima and media of the pulmonary vessels. Expressed in bronchus and colon (at protein level).

It localises to the early endosome membrane. It is found in the late endosome membrane. The protein resides in the lysosome membrane. The protein localises to the cell membrane. Its subcellular location is the golgi apparatus membrane. It localises to the cell projection. It is found in the ruffle membrane. Strongly outwardly rectifying, electrogenic H(+)/Cl(-)exchanger which mediates the exchange of chloride ions against protons. The CLC channel family contains both chloride channels and proton-coupled anion transporters that exchange chloride or another anion for protons. The presence of conserved gating glutamate residues is typical for family members that function as antiporters. In terms of biological role, strongly outwardly rectifying, electrogenic H(+)/Cl(-)exchanger which mediates the exchange of chloride ions against protons. The sequence is that of H(+)/Cl(-) exchange transporter 3 (CLCN3) from Homo sapiens (Human).